Consider the following 158-residue polypeptide: Salt stress-responsive protein YocM (158 aa).

In terms of domain architecture, sHSP spans 51–158 (GKGDASFPSM…GQAKTIVIDD (108 aa)).

It belongs to the small heat shock protein (HSP20) family. As to quaternary structure, forms homodimers, homotetramers and higher oligomers.

It localises to the cytoplasm. In terms of biological role, part of the cellular protein quality control system with a specific role in salt stress response. May facilitate protein homeostasis, together with chemical chaperones that accumulate during the salt stress response. Increased levels of YocM protects against both heat and salt stress. In vitro, displays an unusual aggregase chaperone activity. The protein is Salt stress-responsive protein YocM (yocM) of Bacillus subtilis (strain 168).